The chain runs to 107 residues: Large ribosomal subunit protein uL24 (107 aa).

This sequence belongs to the universal ribosomal protein uL24 family. In terms of assembly, part of the 50S ribosomal subunit.

Its function is as follows. One of two assembly initiator proteins, it binds directly to the 5'-end of the 23S rRNA, where it nucleates assembly of the 50S subunit. In terms of biological role, one of the proteins that surrounds the polypeptide exit tunnel on the outside of the subunit. This is Large ribosomal subunit protein uL24 from Thermoanaerobacter pseudethanolicus (strain ATCC 33223 / 39E) (Clostridium thermohydrosulfuricum).